Reading from the N-terminus, the 194-residue chain is Histone H1 (194 aa).

A1 is modified (N-acetylalanine; partial). Low complexity predominate over residues A1 to K14. Disordered regions lie at residues A1–V31 and A105–K194. A compositionally biased stretch (basic residues) spans A15–K26. Positions S27–K100 constitute an H15 domain. Residues K116–K194 show a composition bias toward basic residues. Residues S145, S161, and S182 each carry the phosphoserine modification.

This sequence belongs to the histone H1/H5 family.

The protein localises to the nucleus. It localises to the chromosome. Its function is as follows. Histones H1 are necessary for the condensation of nucleosome chains into higher-order structures. The protein is Histone H1 of Salmo trutta (Brown trout).